Here is a 288-residue protein sequence, read N- to C-terminus: uncharacterized protein (288 aa).

This is an uncharacterized protein from Methanocaldococcus jannaschii (strain ATCC 43067 / DSM 2661 / JAL-1 / JCM 10045 / NBRC 100440) (Methanococcus jannaschii).